The following is a 748-amino-acid chain: Tyrosine--tRNA ligase 2, cytoplasmic (748 aa).

Met1 is modified (N-acetylmethionine). The 'HIGH' region motif lies at 441–449 (PSGRMHIAQ). L-tyrosine contacts are provided by Tyr564, Gln568, Asp571, and Gln586. Positions 623–627 (KMSKS) match the 'KMSKS' region motif. Residue Lys626 participates in ATP binding.

It belongs to the class-I aminoacyl-tRNA synthetase family.

Its subcellular location is the cytoplasm. It is found in the cytosol. It carries out the reaction tRNA(Tyr) + L-tyrosine + ATP = L-tyrosyl-tRNA(Tyr) + AMP + diphosphate + H(+). Its function is as follows. Catalyzes the attachment of tyrosine to tRNA(Tyr) in a two-step reaction: tyrosine is first activated by ATP to form Tyr-AMP and then transferred to the acceptor end of tRNA(Tyr). The protein is Tyrosine--tRNA ligase 2, cytoplasmic of Arabidopsis thaliana (Mouse-ear cress).